A 451-amino-acid polypeptide reads, in one-letter code: uncharacterized protein (451 aa).

This sequence to ORF5 in pFZ1.

This is an uncharacterized protein from Methanothermobacter thermautotrophicus (Methanobacterium thermoformicicum).